Reading from the N-terminus, the 287-residue chain is uncharacterized protein (287 aa).

This is an uncharacterized protein from Mycoplasma genitalium (strain ATCC 33530 / DSM 19775 / NCTC 10195 / G37) (Mycoplasmoides genitalium).